The primary structure comprises 268 residues: Eukaryotic translation initiation factor 3 subunit J (268 aa).

Disordered regions lie at residues 1–117 (MTPS…DLKH) and 219–242 (NEKM…KTKV). The segment covering 26–44 (DEEDEEVLDSWDAAEDSEV) has biased composition (acidic residues). A coiled-coil region spans residues 40-95 (EDSEVEREKAAKAAEAKAKAEAEAAAKKKSKAQRIEEHKAERRKNAEADSEEDEDE). Basic and acidic residues-rich tracts occupy residues 45 to 65 (EREK…EAAA) and 72 to 86 (QRIE…KNAE). A compositionally biased stretch (acidic residues) spans 87–99 (ADSEEDEDEDEDE). Basic and acidic residues-rich tracts occupy residues 100 to 117 (AEKR…DLKH) and 220 to 232 (EKMR…DKGS).

This sequence belongs to the eIF-3 subunit J family. In terms of assembly, component of the eukaryotic translation initiation factor 3 (eIF-3) complex.

Its subcellular location is the cytoplasm. Component of the eukaryotic translation initiation factor 3 (eIF-3) complex, which is involved in protein synthesis of a specialized repertoire of mRNAs and, together with other initiation factors, stimulates binding of mRNA and methionyl-tRNAi to the 40S ribosome. The eIF-3 complex specifically targets and initiates translation of a subset of mRNAs involved in cell proliferation. This chain is Eukaryotic translation initiation factor 3 subunit J (hcr1), found in Aspergillus clavatus (strain ATCC 1007 / CBS 513.65 / DSM 816 / NCTC 3887 / NRRL 1 / QM 1276 / 107).